A 182-amino-acid polypeptide reads, in one-letter code: Large ribosomal subunit protein uL6 (182 aa).

The protein belongs to the universal ribosomal protein uL6 family. As to quaternary structure, part of the 50S ribosomal subunit.

Its function is as follows. This protein binds to the 23S rRNA, and is important in its secondary structure. It is located near the subunit interface in the base of the L7/L12 stalk, and near the tRNA binding site of the peptidyltransferase center. This Methanococcus vannielii protein is Large ribosomal subunit protein uL6.